The sequence spans 85 residues: Large ribosomal subunit protein bL27 (85 aa).

Positions 1-21 are disordered; sequence MAHKKGLGSTKNGRDSQAKRL.

It belongs to the bacterial ribosomal protein bL27 family.

This Thermus thermophilus (strain ATCC BAA-163 / DSM 7039 / HB27) protein is Large ribosomal subunit protein bL27.